A 403-amino-acid chain; its full sequence is Poly(rC)-binding protein 4 (403 aa).

KH domains lie at Thr17–Gly67, Pro101–Gly154, and Thr241–Gly293.

It is found in the cytoplasm. Functionally, single-stranded nucleic acid binding protein that binds preferentially to oligo dC. This chain is Poly(rC)-binding protein 4 (PCBP4), found in Bos taurus (Bovine).